The chain runs to 187 residues: Adenine phosphoribosyltransferase (187 aa).

Position 133-137 (133-137 (ATGGS)) interacts with AMP.

The protein belongs to the purine/pyrimidine phosphoribosyltransferase family. Homodimer. The cofactor is Mg(2+).

It is found in the cytoplasm. It localises to the nucleus. It carries out the reaction AMP + diphosphate = 5-phospho-alpha-D-ribose 1-diphosphate + adenine. Its pathway is purine metabolism; AMP biosynthesis via salvage pathway; AMP from adenine: step 1/1. Its function is as follows. Catalyzes a salvage reaction resulting in the formation of AMP, that is energically less costly than de novo synthesis. The chain is Adenine phosphoribosyltransferase (APT1) from Eremothecium gossypii (strain ATCC 10895 / CBS 109.51 / FGSC 9923 / NRRL Y-1056) (Yeast).